The following is a 216-amino-acid chain: Histone doublet H4-H3 (216 aa).

Basic residues predominate over residues 1–12; the sequence is MSKAGKKVKAQQ. Residues 1-23 are disordered; sequence MSKAGKKVKAQQHGHLADHVSVG.

Its subcellular location is the host nucleus. It is found in the host cytoplasm. It localises to the virion. In terms of biological role, histone-like protein that is recruited to viral factories during viral replication and participates in viral DNA packaging and virion production probably by forming unstable nucleosome-like particles. May compact the viral DNA. This chain is Histone doublet H4-H3, found in Melbournevirus (MelV).